The primary structure comprises 629 residues: Probable alpha-L-arabinofuranosidase A (629 aa).

Residues 1 to 25 (MVALSTLSGLSALPFLFSLVQNVYG) form the signal peptide. N-linked (GlcNAc...) asparagine glycans are attached at residues Asn-36, Asn-51, Asn-140, Asn-152, Asn-168, Asn-171, Asn-260, Asn-494, and Asn-534.

It belongs to the glycosyl hydrolase 51 family.

The protein resides in the secreted. The enzyme catalyses Hydrolysis of terminal non-reducing alpha-L-arabinofuranoside residues in alpha-L-arabinosides.. The protein operates within glycan metabolism; L-arabinan degradation. Alpha-L-arabinofuranosidase involved in the degradation of arabinoxylan, a major component of plant hemicellulose. Acts only on small linear 1,5-alpha-linked L-arabinofuranosyl oligosaccharides. This chain is Probable alpha-L-arabinofuranosidase A (abfA), found in Aspergillus flavus (strain ATCC 200026 / FGSC A1120 / IAM 13836 / NRRL 3357 / JCM 12722 / SRRC 167).